We begin with the raw amino-acid sequence, 254 residues long: Ribosomal RNA small subunit methyltransferase J (254 aa).

S-adenosyl-L-methionine is bound by residues 107–108 (RD), 123–124 (ER), and aspartate 174.

The protein belongs to the methyltransferase superfamily. RsmJ family.

It is found in the cytoplasm. The enzyme catalyses guanosine(1516) in 16S rRNA + S-adenosyl-L-methionine = N(2)-methylguanosine(1516) in 16S rRNA + S-adenosyl-L-homocysteine + H(+). Its function is as follows. Specifically methylates the guanosine in position 1516 of 16S rRNA. This Coxiella burnetii (strain CbuK_Q154) (Coxiella burnetii (strain Q154)) protein is Ribosomal RNA small subunit methyltransferase J.